The primary structure comprises 382 residues: Lipid-A-disaccharide synthase (382 aa).

Belongs to the LpxB family.

The enzyme catalyses 2-N,3-O-bis[(3R)-3-hydroxytetradecanoyl]-alpha-D-glucosaminyl 1-phosphate + UDP-2-N,3-O-bis[(3R)-3-hydroxytetradecanoyl]-alpha-D-glucosamine = lipid A disaccharide (E. coli) + UDP + H(+). It carries out the reaction a lipid X + a UDP-2-N,3-O-bis[(3R)-3-hydroxyacyl]-alpha-D-glucosamine = a lipid A disaccharide + UDP + H(+). It functions in the pathway glycolipid biosynthesis; lipid IV(A) biosynthesis; lipid IV(A) from (3R)-3-hydroxytetradecanoyl-[acyl-carrier-protein] and UDP-N-acetyl-alpha-D-glucosamine: step 5/6. Functionally, condensation of UDP-2,3-diacylglucosamine and 2,3-diacylglucosamine-1-phosphate to form lipid A disaccharide, a precursor of lipid A, a phosphorylated glycolipid that anchors the lipopolysaccharide to the outer membrane of the cell. The protein is Lipid-A-disaccharide synthase of Shigella flexneri.